A 335-amino-acid chain; its full sequence is Proline racemase (335 aa).

The active-site Proton acceptor is the Cys-91. Residue Cys-255 is the Proton donor of the active site.

Belongs to the proline racemase family. In terms of assembly, homodimer.

The enzyme catalyses L-proline = D-proline. Its function is as follows. Catalyzes the reversible interconversion of L- and D-proline. Plays an important role in the regulation of intra- and extracellular amino acid pools, allowing the bacterium to profit from host precursors and enzymatic pathways. Strong B-cell mitogen. The protein is Proline racemase of Clostridioides difficile (strain 630) (Peptoclostridium difficile).